A 303-amino-acid polypeptide reads, in one-letter code: Probable acetylxylan esterase A (303 aa).

An N-terminal signal peptide occupies residues 1–23 (MLSTHLLFLATTLLTSLFHPIAA). S147 functions as the Charge relay system in the catalytic mechanism. The N-linked (GlcNAc...) asparagine glycan is linked to N189.

Belongs to the carbohydrate esterase 1 (CE1) family. AxeA subfamily. In terms of assembly, monomer.

Its subcellular location is the secreted. It carries out the reaction Deacetylation of xylans and xylo-oligosaccharides.. It functions in the pathway glycan degradation; xylan degradation. Functionally, acetylxylan esterase involved in the hydrolysis of xylan, a major structural heterogeneous polysaccharide found in plant biomass representing the second most abundant polysaccharide in the biosphere, after cellulose. Degrades acetylated xylans by cleaving acetyl side groups from the hetero-xylan backbone. The chain is Probable acetylxylan esterase A (axeA) from Aspergillus niger (strain ATCC MYA-4892 / CBS 513.88 / FGSC A1513).